The primary structure comprises 239 residues: MQKLELLYEGKAKRIYRTESADMVWVEYKDSATAFNGEKKETITGKGRLNNEITTLLFRKLQEVGIKTHFVEKLSETEQLVKKVSIIPLEVVTRNVIAGSLSKRLGMEEGTVLAEPIVEFYFKDDDLGDPLVTEDHIRVLNVASPEQVSVLRDMALQINQVLIDHFASCRVRLVDFKLEFGVTDEGAIILADEISPDTCRLWDETSNEKFDKDVFRRDLGNLTDAYEEILKRLGGISHV.

Belongs to the SAICAR synthetase family.

The enzyme catalyses 5-amino-1-(5-phospho-D-ribosyl)imidazole-4-carboxylate + L-aspartate + ATP = (2S)-2-[5-amino-1-(5-phospho-beta-D-ribosyl)imidazole-4-carboxamido]succinate + ADP + phosphate + 2 H(+). It functions in the pathway purine metabolism; IMP biosynthesis via de novo pathway; 5-amino-1-(5-phospho-D-ribosyl)imidazole-4-carboxamide from 5-amino-1-(5-phospho-D-ribosyl)imidazole-4-carboxylate: step 1/2. In Bacillus cereus (strain 03BB102), this protein is Phosphoribosylaminoimidazole-succinocarboxamide synthase.